Here is a 288-residue protein sequence, read N- to C-terminus: Pantothenate synthetase (288 aa).

An ATP-binding site is contributed by 30-37 (MGNLHEGH). H37 acts as the Proton donor in catalysis. Residue Q61 participates in (R)-pantoate binding. Q61 serves as a coordination point for beta-alanine. 148–151 (GQKD) is an ATP binding site. Residue Q154 coordinates (R)-pantoate. ATP contacts are provided by residues V177 and 185 to 188 (LSSR).

The protein belongs to the pantothenate synthetase family. Homodimer.

The protein localises to the cytoplasm. The catalysed reaction is (R)-pantoate + beta-alanine + ATP = (R)-pantothenate + AMP + diphosphate + H(+). Its pathway is cofactor biosynthesis; (R)-pantothenate biosynthesis; (R)-pantothenate from (R)-pantoate and beta-alanine: step 1/1. Catalyzes the condensation of pantoate with beta-alanine in an ATP-dependent reaction via a pantoyl-adenylate intermediate. The sequence is that of Pantothenate synthetase from Psychrobacter arcticus (strain DSM 17307 / VKM B-2377 / 273-4).